Consider the following 295-residue polypeptide: G1/S-specific cyclin-D1 (295 aa).

The 125-residue stretch at 28-152 (LRAMLKAEET…LLVNKLKWNL (125 aa)) folds into the Cyclin N-terminal domain. The tract at residues 262-295 (AQQNMDPKAAEEEEEEEEEVDLACTPTDVRDVDI) is disordered. K269 is covalently cross-linked (Glycyl lysine isopeptide (Lys-Gly) (interchain with G-Cter in ubiquitin)). Over residues 272 to 282 (EEEEEEEEEVD) the composition is skewed to acidic residues. T286 is modified (phosphothreonine).

This sequence belongs to the cyclin family. Cyclin D subfamily. As to quaternary structure, interacts with either CDK4 or CDK6 protein kinase to form a serine/threonine kinase holoenzyme complex. The cyclin subunit imparts substrate specificity to the complex. Component of the ternary complex CCND1/CDK4/CDKN1B required for nuclear translocation and modulation of CDK4-mediated kinase activity. Interacts directly with CDKN1B. Can form similar complexes with either CDKN1A or CDKN2A. Interacts with UHRF2; the interaction ubiquitinates CCND1 and appears to occur independently of phosphorylation. Interacts with USP2. Interacts (via cyclin N-terminal domain) with INSM1 (via N-terminal region); the interaction competes with the binding of CCND1 to CDK4 during cell cycle progression and inhibits CDK4 activity. Interacts with CDK4; the interaction is prevented with the binding of CCND1 to INSM1 during cell cycle progression. In terms of processing, phosphorylation at Thr-286 by MAP kinases is required for ubiquitination and degradation by the DCX(AMBRA1) complex. It also plays an essential role for recognition by the FBXO31 component of SCF (SKP1-cullin-F-box) protein ligase complex following DNA damage. Ubiquitinated at Lys-269 by the DCX(AMBRA1) complex during the transition from G1 to S cell phase, leading to its degradation: ubiquitination is dependent on Thr-286 phosphorylation. The DCX(AMBRA1) complex represents the major regulator of CCND1 stability during the G1/S transition. Also ubiquitinated by the SCF(FBXO4) and Cul7-RING(FBXW8) ubiquitin-protein ligase complexes. Following DNA damage it is ubiquitinated by the SCF(FBXO31) protein ligase complex. SCF(FBXO31) ubiquitination is dependent on Thr-286 phosphorylation. Ubiquitinated also by UHRF2 apparently in a phosphorylation-independent manner. Ubiquitination leads to its degradation and G1 arrest. Deubiquitinated by USP2; leading to its stabilization.

Its subcellular location is the nucleus. It localises to the cytoplasm. The protein resides in the nucleus membrane. Regulatory component of the cyclin D1-CDK4 (DC) complex that phosphorylates and inhibits members of the retinoblastoma (RB) protein family including RB1 and regulates the cell-cycle during G(1)/S transition. Phosphorylation of RB1 allows dissociation of the transcription factor E2F from the RB/E2F complex and the subsequent transcription of E2F target genes which are responsible for the progression through the G(1) phase. Hypophosphorylates RB1 in early G(1) phase. Cyclin D-CDK4 complexes are major integrators of various mitogenenic and antimitogenic signals. Also a substrate for SMAD3, phosphorylating SMAD3 in a cell-cycle-dependent manner and repressing its transcriptional activity. Component of the ternary complex, cyclin D1/CDK4/CDKN1B, required for nuclear translocation and activity of the cyclin D-CDK4 complex. Exhibits transcriptional corepressor activity with INSM1 on the NEUROD1 and INS promoters in a cell cycle-independent manner. This is G1/S-specific cyclin-D1 from Homo sapiens (Human).